The sequence spans 245 residues: 4-hydroxy-tetrahydrodipicolinate reductase (245 aa).

Residues 7 to 12, 75 to 77, and 102 to 105 each bind NAD(+); these read GAKGKV, GTT, and APNF. The active-site Proton donor/acceptor is His132. Position 133 (His133) interacts with (S)-2,3,4,5-tetrahydrodipicolinate. Catalysis depends on Lys136, which acts as the Proton donor. 142 to 143 contacts (S)-2,3,4,5-tetrahydrodipicolinate; sequence GT.

The protein belongs to the DapB family.

The protein localises to the cytoplasm. It carries out the reaction (S)-2,3,4,5-tetrahydrodipicolinate + NAD(+) + H2O = (2S,4S)-4-hydroxy-2,3,4,5-tetrahydrodipicolinate + NADH + H(+). The enzyme catalyses (S)-2,3,4,5-tetrahydrodipicolinate + NADP(+) + H2O = (2S,4S)-4-hydroxy-2,3,4,5-tetrahydrodipicolinate + NADPH + H(+). It functions in the pathway amino-acid biosynthesis; L-lysine biosynthesis via DAP pathway; (S)-tetrahydrodipicolinate from L-aspartate: step 4/4. Functionally, catalyzes the conversion of 4-hydroxy-tetrahydrodipicolinate (HTPA) to tetrahydrodipicolinate. The chain is 4-hydroxy-tetrahydrodipicolinate reductase from Mycobacterium sp. (strain JLS).